A 388-amino-acid chain; its full sequence is 4-hydroxy-3-methylbut-2-en-1-yl diphosphate synthase (flavodoxin) (388 aa).

Residues Cys281, Cys284, Cys316, and Glu323 each contribute to the [4Fe-4S] cluster site.

It belongs to the IspG family. Requires [4Fe-4S] cluster as cofactor.

It catalyses the reaction (2E)-4-hydroxy-3-methylbut-2-enyl diphosphate + oxidized [flavodoxin] + H2O + 2 H(+) = 2-C-methyl-D-erythritol 2,4-cyclic diphosphate + reduced [flavodoxin]. The protein operates within isoprenoid biosynthesis; isopentenyl diphosphate biosynthesis via DXP pathway; isopentenyl diphosphate from 1-deoxy-D-xylulose 5-phosphate: step 5/6. In terms of biological role, converts 2C-methyl-D-erythritol 2,4-cyclodiphosphate (ME-2,4cPP) into 1-hydroxy-2-methyl-2-(E)-butenyl 4-diphosphate. The polypeptide is 4-hydroxy-3-methylbut-2-en-1-yl diphosphate synthase (flavodoxin) (Paenarthrobacter aurescens (strain TC1)).